We begin with the raw amino-acid sequence, 224 residues long: Adenylate kinase (224 aa).

10–15 (GSGKGT) serves as a coordination point for ATP. Residues 30 to 59 (ESGAIFRENISKGTELGAKAKEYIDRGDLV) are NMP. AMP contacts are provided by residues Ser-31, Arg-36, 57–59 (DLV), 85–88 (GFPR), and Gln-92. Positions 126 to 165 (GRRLCVNDNNHPNNIFIDAIKPDGDKCRVCGGELKTRSDD) are LID. Position 127 (Arg-127) interacts with ATP. Positions 162 and 174 each coordinate AMP. Pro-211 contacts ATP.

The protein belongs to the adenylate kinase family. In terms of assembly, monomer.

Its subcellular location is the cytoplasm. It catalyses the reaction AMP + ATP = 2 ADP. It functions in the pathway purine metabolism; AMP biosynthesis via salvage pathway; AMP from ADP: step 1/1. Functionally, catalyzes the reversible transfer of the terminal phosphate group between ATP and AMP. Plays an important role in cellular energy homeostasis and in adenine nucleotide metabolism. The polypeptide is Adenylate kinase (Desulfosudis oleivorans (strain DSM 6200 / JCM 39069 / Hxd3) (Desulfococcus oleovorans)).